An 82-amino-acid chain; its full sequence is uncharacterized protein (82 aa).

The next 2 helical transmembrane spans lie at Leu29 to Ile49 and Trp55 to Phe75.

The protein resides in the cell membrane. This is an uncharacterized protein from Escherichia coli (strain K12).